Reading from the N-terminus, the 469-residue chain is MNPNQKIITIGSVSLTIATICFLMQIAILVTTVTLHFKQYECDYPANNQAMPCEPIIIERNITEIVYLTNTTIEKEVCPKLVEYRNWSKPQCKITGFAPFSKDNSIRLSAGGDIWVTREPYVSCDPGKCYQFALGQGTTLDNKHSNDTIHDRTPHRTLLMNELGVPFHLGTRQVCIAWSSSSCHDGKAWLHVCVTGYDKNATASFIYDGRLVDSIGSWSQNILRTQESECVCINGTCTVVMTDGSASGRADTKILFIEEGKIVHTSPLSGSAQHVEECSCYPRYPGVRCICRDNWKGSNRPVVDINVKDYSINSSYVCSGLVGDTPRNNDRSSSSYCQNPNNEKGTHGVKGWAFDDGNDVWMGRTISEDSRSGYETFKVIGGWSTPNSKLQINRQVIVDSDNRSGYSGIFSVEGKSCINRCFYVELIRGREQETRVWWTSNSIVVFCGTSGTYGTGSWPDGADINIMPI.

At 1–9 (MNPNQKIIT) the chain is on the intravirion side. A helical membrane pass occupies residues 10–30 (IGSVSLTIATICFLMQIAILV). The involved in apical transport and lipid raft association stretch occupies residues 11 to 33 (GSVSLTIATICFLMQIAILVTTV). The Virion surface portion of the chain corresponds to 31 to 469 (TTVTLHFKQY…DGADINIMPI (439 aa)). The tract at residues 36–88 (HFKQYECDYPANNQAMPCEPIIIERNITEIVYLTNTTIEKEVCPKLVEYRNWS) is hypervariable stalk region. N-linked (GlcNAc...) asparagine; by host glycosylation is found at Asn61, Asn70, and Asn86. The tract at residues 91 to 469 (QCKITGFAPF…DGADINIMPI (379 aa)) is head of neuraminidase. 8 cysteine pairs are disulfide-bonded: Cys92-Cys417, Cys124-Cys129, Cys183-Cys230, Cys232-Cys237, Cys278-Cys291, Cys280-Cys289, Cys318-Cys337, and Cys421-Cys447. Arg118 provides a ligand contact to substrate. Asn146 carries N-linked (GlcNAc...) asparagine; by host glycosylation. Asp151 serves as the catalytic Proton donor/acceptor. Substrate is bound at residue Arg152. Asn200 and Asn234 each carry an N-linked (GlcNAc...) asparagine; by host glycan. 276–277 (EE) lines the substrate pocket. Position 292 (Arg292) interacts with substrate. Residues Asp293 and Gly297 each contribute to the Ca(2+) site. The N-linked (GlcNAc...) asparagine; by host glycan is linked to Asn313. Asp324 is a binding site for Ca(2+). Arg371 provides a ligand contact to substrate. N-linked (GlcNAc...) asparagine; by host glycosylation is present at Asn402. Tyr406 (nucleophile) is an active-site residue.

This sequence belongs to the glycosyl hydrolase 34 family. Homotetramer. Ca(2+) serves as cofactor. In terms of processing, N-glycosylated.

The protein localises to the virion membrane. It localises to the host apical cell membrane. It carries out the reaction Hydrolysis of alpha-(2-&gt;3)-, alpha-(2-&gt;6)-, alpha-(2-&gt;8)- glycosidic linkages of terminal sialic acid residues in oligosaccharides, glycoproteins, glycolipids, colominic acid and synthetic substrates.. With respect to regulation, inhibited by the neuraminidase inhibitors zanamivir (Relenza) and oseltamivir (Tamiflu). These drugs interfere with the release of progeny virus from infected cells and are effective against all influenza strains. Resistance to neuraminidase inhibitors is quite rare. Catalyzes the removal of terminal sialic acid residues from viral and cellular glycoconjugates. Cleaves off the terminal sialic acids on the glycosylated HA during virus budding to facilitate virus release. Additionally helps virus spread through the circulation by further removing sialic acids from the cell surface. These cleavages prevent self-aggregation and ensure the efficient spread of the progeny virus from cell to cell. Otherwise, infection would be limited to one round of replication. Described as a receptor-destroying enzyme because it cleaves a terminal sialic acid from the cellular receptors. May facilitate viral invasion of the upper airways by cleaving the sialic acid moieties on the mucin of the airway epithelial cells. Likely to plays a role in the budding process through its association with lipid rafts during intracellular transport. May additionally display a raft-association independent effect on budding. Plays a role in the determination of host range restriction on replication and virulence. Sialidase activity in late endosome/lysosome traffic seems to enhance virus replication. This chain is Neuraminidase, found in Aves (whales).